The sequence spans 483 residues: Cyclic AMP-dependent transcription factor ATF-7 (483 aa).

The transactivation domain stretch occupies residues 1-285; the sequence is MGDDRPFVCN…GMVVGSASTM (285 aa). The C2H2-type zinc-finger motif lies at 7–31; it reads FVCNAPGCGQRFTNEDHLAVHKHKH. At Thr-51 the chain carries Phosphothreonine; by MAPK11. A phosphothreonine mark is found at Thr-53 and Thr-101. Lys-107 participates in a covalent cross-link: Glycyl lysine isopeptide (Lys-Gly) (interchain with G-Cter in SUMO1). 2 disordered regions span residues 110 to 148 and 299 to 345; these read EPVE…TPTP and HPDA…NRAA. 2 stretches are compositionally biased toward low complexity: residues 114-126 and 307-320; these read VDSS…ASSP and QPQV…PSTG. Over residues 326 to 343 the composition is skewed to basic and acidic residues; sequence TVDEDPDERRQRFLERNR. The bZIP domain occupies 332–395; sequence DERRQRFLER…AQLKQLLLAH (64 aa). Residues 334–354 form a basic motif region; sequence RRQRFLERNRAAASRCRQKRK. A leucine-zipper region spans residues 360-388; that stretch reads LEKKAEELTSQNIQLSNEVTLLRNEVAQL. Disordered stretches follow at residues 407–440 and 464–483; these read TQGY…SNGL and LSMP…SAGR. 2 positions are modified to phosphoserine: Ser-413 and Ser-423. The segment covering 429-440 has biased composition (polar residues); that stretch reads QHSSATAPSNGL.

Belongs to the bZIP family. Homodimer; binds DNA as homodimer. Heterodimer; heterodimerizes with other members of ATF family and with JUN family members. Interacts with JNK2; the interaction does not phosphorylate ATF7 but acts as a docking site for other ATF-associated partners such as JUN family members. Interacts (via its transactivation domain) with TAF12 (isoforms TAFII15 and TAFII20); the interaction potentiates the transactivation activity (isoform TAFII20 only) and is inhibited by ATF7 sumoylation. Interacts with TAF4; the interaction inhibits the TAF12-dependent transactivation. Interacts with MAPK9; the interaction does not phosphorylate ATF7 but acts as a docking site for ATF7-associated partners such as JUN. Interacts with Ku complex components XRCC6 and XRCC7. Interacts with TERT. Post-translationally, on EGF stimulation, phosphorylated first on Thr-53 allowing subsequent phosphorylation on Thr-51. This latter phosphorylation prevents sumoylation, increases binding to TAF12 and enhances transcriptional activity. Social isolation stress as well as TNF-alpha also induce the phosphorylation of ATF7. Phosphorylated in proliferating colonic and small intestinal epithelial cells. In terms of processing, sumoylation delays nuclear localization and inhibits transactivation activity through preventing binding to TAF12. RANBP2 appears to be the specific E3 ligase.

It localises to the nucleus. The protein resides in the nucleoplasm. The protein localises to the chromosome. It is found in the telomere. Functionally, stress-responsive chromatin regulator that plays a role in various biological processes including innate immunological memory, adipocyte differentiation or telomerase regulation. In absence of stress, contributes to the formation of heterochromatin and heterochromatin-like structure by recruiting histone H3K9 tri- and di-methyltransferases thus silencing the transcription of target genes such as STAT1 in adipocytes, or genes involved in innate immunity in macrophages and adipocytes. Stress induces ATF7 phosphorylation that disrupts interactions with histone methyltransferase and enhances the association with coactivators containing histone acetyltransferase and/or histone demethylase, leading to disruption of the heterochromatin-like structure and subsequently transcriptional activation. In response to TNF-alpha, which is induced by various stresses, phosphorylated ATF7 and telomerase are released from telomeres leading to telomere shortening. Plays also a role in maintaining epithelial regenerative capacity and protecting against cell death during intestinal epithelial damage and repair. This Pongo abelii (Sumatran orangutan) protein is Cyclic AMP-dependent transcription factor ATF-7 (ATF7).